We begin with the raw amino-acid sequence, 441 residues long: UDP-N-acetylglucosamine--peptide N-acetylglucosaminyltransferase stabilizing protein GtfB (441 aa).

It belongs to the GtfB family. As to quaternary structure, forms a heterotetramer with 2 subunits each of GtfA and GtfB. Part of the accessory SecA2/SecY2 protein translocation apparatus.

The protein localises to the cell membrane. It functions in the pathway protein modification; protein glycosylation. Required for polymorphic O-glycosylation of the serine-rich repeat protein (SRRP) in this bacteria. A stabilizing protein that is part of the accessory SecA2/SecY2 system specifically required to export serine-rich repeat cell wall proteins encoded in the same operon. The GtfA-GtfB complex adds GlcNAc from UDP-GlcNAc to the substrate protein, attaching the first sugar residue. Stabilizes the glycosylation activity of GtfA. Has no N-acetylglucosaminyl transferase activity on its own. In Limosilactobacillus reuteri subsp. suis (strain ATCC 53608 / LMG 31752 / 1063) (Lactobacillus reuteri), this protein is UDP-N-acetylglucosamine--peptide N-acetylglucosaminyltransferase stabilizing protein GtfB.